Consider the following 186-residue polypeptide: Serine hydrolase RBBP9 (186 aa).

An involved in binding to RB1 region spans residues 63–67 (LHCDE). Active-site charge relay system residues include S75, D138, and H165.

This sequence belongs to the RBBP9 family. As to quaternary structure, interacts with RB1; the interaction disrupts RB1 binding to E2F1. Interacts with RBL1 and RBL2. Expressed at higher levels in tumor tissues such as carcinoma.

It carries out the reaction valacyclovir + H2O = acyclovir + L-valine + H(+). With respect to regulation, inhibited by the natural product emetine produced by the ipecac root. Serine hydrolase. Catalyzes the hydrolytic activation of amino acid ester of the antiviral prodrug valacyclovir to its corresponding active drug, acyclovir. May negatively regulate basal or autocrine TGF-beta signaling by suppressing SMAD2-SMAD3 phosphorylation. May play a role in the transformation process due to its capacity to confer resistance to the growth-inhibitory effects of TGF-beta through interaction with RB1 and the subsequent displacement of E2F1. This chain is Serine hydrolase RBBP9, found in Homo sapiens (Human).